We begin with the raw amino-acid sequence, 340 residues long: N-acetyl-gamma-glutamyl-phosphate reductase (340 aa).

Residue Cys149 is part of the active site.

Belongs to the NAGSA dehydrogenase family. Type 1 subfamily.

It localises to the cytoplasm. The catalysed reaction is N-acetyl-L-glutamate 5-semialdehyde + phosphate + NADP(+) = N-acetyl-L-glutamyl 5-phosphate + NADPH + H(+). It functions in the pathway amino-acid biosynthesis; L-arginine biosynthesis; N(2)-acetyl-L-ornithine from L-glutamate: step 3/4. Catalyzes the NADPH-dependent reduction of N-acetyl-5-glutamyl phosphate to yield N-acetyl-L-glutamate 5-semialdehyde. In Ruthia magnifica subsp. Calyptogena magnifica, this protein is N-acetyl-gamma-glutamyl-phosphate reductase.